A 465-amino-acid chain; its full sequence is MKPLLLLVAVALGLATVVSVVSAGPEAIECWFVEDAGGGGLSKKPATLLLRHGPRGPPPRPDLDPKLYFKVDDPAGMLLAAFRRYPAGASAPHCEMSRFIPFPASAKWARSLSPEQNCPRALDGDWLLVSVSSTLFSLSSLLRPQPEPLREPVVITMATVVLTVLTHNPAPRVQLGKDAVLDLRFAYAPSALEGSPSLDAGPPPFGLEWRRQHRGKGHLLLAATPGLAGRMPPAQEKATAFAAWDDDEPWGPWTGNGTFWLPAVKPSQEGVYLATVHLPYLQGQVSLELTVHKAPRVSLTPAPVVWAAPGEAPPELLCLASHFFPAEGLEVKWELRGGPGGSSRKVEGKTWLSTIRHHSDGSVSQSGHLQLPPVTAKQHGVHYVCRVYHSSLPASGRSADVTLEVAGFSGPSIEDGIGLFLSAFLLLGLLKVLGWLAAYWTIPEVSKEKATAASLTIPRNSKKSQ.

Residues M1–A23 form the signal peptide. Over G24–G416 the chain is Lumenal. Residues C30 and C94 are joined by a disulfide bond. A glycan (N-linked (GlcNAc...) asparagine) is linked at N256. The Ig-like C1-type domain occupies P295–T402. A disulfide bond links C318 and C385. A helical membrane pass occupies residues I417 to A437. Topologically, residues A438–Q465 are cytoplasmic.

In terms of assembly, heterodimer with PDIA3; disulfide-linked. Obligatory mediator for the interaction between newly assembled MHC class I molecules, calreticulin, PDIA3 and TAP. Up to 4 MHC class I/tapasin complexes bind to 1 TAP. Interacts with HLA-G-B2M complex; this interaction is required for loading of high affinity peptides. On its own or as part of MHC class I peptide loading complex, interacts with ligand-free MR1 or MR1-B2M complex, providing for stable MR1 pools ready for metabolite antigen processing.

It localises to the endoplasmic reticulum membrane. In terms of biological role, involved in the association of MHC class I with transporter associated with antigen processing (TAP) and in the assembly of MHC class I with peptide (peptide loading). This chain is Tapasin (Tapbp), found in Mus musculus (Mouse).